The following is a 218-amino-acid chain: Large ribosomal subunit protein uL3 (218 aa).

Disordered stretches follow at residues Phe128–Gly167 and Ser199–Lys218.

The protein belongs to the universal ribosomal protein uL3 family. Part of the 50S ribosomal subunit. Forms a cluster with proteins L14 and L19.

In terms of biological role, one of the primary rRNA binding proteins, it binds directly near the 3'-end of the 23S rRNA, where it nucleates assembly of the 50S subunit. This is Large ribosomal subunit protein uL3 from Prochlorococcus marinus (strain NATL2A).